Consider the following 231-residue polypeptide: LexA repressor (231 aa).

The H-T-H motif DNA-binding region spans 26 to 46 (FEEMKEALDLKSKSGIHRLIG). Catalysis depends on for autocatalytic cleavage activity residues Ser152 and Lys190.

This sequence belongs to the peptidase S24 family. As to quaternary structure, homodimer.

It carries out the reaction Hydrolysis of Ala-|-Gly bond in repressor LexA.. Its function is as follows. Represses a number of genes involved in the response to DNA damage (SOS response), including recA and lexA. In the presence of single-stranded DNA, RecA interacts with LexA causing an autocatalytic cleavage which disrupts the DNA-binding part of LexA, leading to derepression of the SOS regulon and eventually DNA repair. The chain is LexA repressor from Acidiphilium cryptum (strain JF-5).